A 78-amino-acid chain; its full sequence is D-alanyl carrier protein (78 aa).

The Carrier domain maps to 1 to 78; sequence MEFKQEVLDV…NIVNKLTELK (78 aa). Ser-36 bears the O-(pantetheine 4'-phosphoryl)serine mark.

The protein belongs to the DltC family. In terms of processing, 4'-phosphopantetheine is transferred from CoA to a specific serine of apo-DCP.

It localises to the cytoplasm. It functions in the pathway cell wall biogenesis; lipoteichoic acid biosynthesis. Its function is as follows. Carrier protein involved in the D-alanylation of lipoteichoic acid (LTA). The loading of thioester-linked D-alanine onto DltC is catalyzed by D-alanine--D-alanyl carrier protein ligase DltA. The DltC-carried D-alanyl group is further transferred to cell membrane phosphatidylglycerol (PG) by forming an ester bond, probably catalyzed by DltD. D-alanylation of LTA plays an important role in modulating the properties of the cell wall in Gram-positive bacteria, influencing the net charge of the cell wall. This chain is D-alanyl carrier protein, found in Bacillus velezensis (strain DSM 23117 / BGSC 10A6 / LMG 26770 / FZB42) (Bacillus amyloliquefaciens subsp. plantarum).